Here is a 455-residue protein sequence, read N- to C-terminus: Probable ATP-dependent RNA helicase DDX47 (455 aa).

Positions 1-10 (MAAPEEHDSP) are enriched in basic and acidic residues. The segment at 1–20 (MAAPEEHDSPTEASQPIVEE) is disordered. At Ala-2 the chain carries N-acetylalanine. Position 9 is a phosphoserine (Ser-9). Residues 24–52 (KTFKDLGVTDVLCEACDQLGWTKPTKIQI) carry the Q motif motif. The Helicase ATP-binding domain occupies 55 to 226 (IPLALQGRDI…RAALKNPVKC (172 aa)). Residue 68–75 (AETGSGKT) participates in ATP binding. Thr-149 is subject to Phosphothreonine. Residues 174-177 (DEAD) carry the DEAD box motif. The Helicase C-terminal domain occupies 237–397 (KLQQYYIFIP…GFPTQDDEVM (161 aa)). Residues 413–428 (ELREHGEKKKRSREDA) show a composition bias toward basic and acidic residues. The interval 413 to 455 (ELREHGEKKKRSREDAGDNDDTEGAIGVRNKVAGGKMKKRKGR) is disordered. Ser-424 is subject to Phosphoserine.

Belongs to the DEAD box helicase family. DDX47/RRP3 subfamily. In terms of assembly, interacts with AGO1 and AGO2. Interacts with GABARAP. Interacts with NOL8; the interaction is RNA-dependent. Expressed in skin, lung and breast. Also expressed in the brain.

The protein localises to the nucleus. It is found in the nucleolus. It carries out the reaction ATP + H2O = ADP + phosphate + H(+). Functionally, required for efficient ribosome biogenesis. May have a role in mRNA splicing. Involved in apoptosis. This Homo sapiens (Human) protein is Probable ATP-dependent RNA helicase DDX47 (DDX47).